We begin with the raw amino-acid sequence, 251 residues long: Ribosomal RNA small subunit methyltransferase J (251 aa).

S-adenosyl-L-methionine-binding positions include 100-101 (RD), 116-117 (ER), and Asp-170.

This sequence belongs to the methyltransferase superfamily. RsmJ family.

It is found in the cytoplasm. It carries out the reaction guanosine(1516) in 16S rRNA + S-adenosyl-L-methionine = N(2)-methylguanosine(1516) in 16S rRNA + S-adenosyl-L-homocysteine + H(+). Specifically methylates the guanosine in position 1516 of 16S rRNA. The chain is Ribosomal RNA small subunit methyltransferase J from Actinobacillus pleuropneumoniae serotype 3 (strain JL03).